The primary structure comprises 630 residues: Kelch-like protein 14 (630 aa).

The 121-residue stretch at 33 to 153 folds into the BTB domain; sequence CDVTLTAQGQ…LYTANVTLSL (121 aa). The interval 69–117 is disordered; it reads GGGVGGQDGLGAPKDQQQQQQPQQQPPQQQQPPPQEEPGTPSSSPDDKL. Residues 84–96 show a composition bias toward low complexity; the sequence is QQQQQQPQQQPPQ. Residues 212 to 281 form the BACK domain; it reads VEDVLLLNFE…PAPELVERVQ (70 aa). Kelch repeat units lie at residues 325-374, 375-426, 427-473, 475-520, 522-572, and 574-622; these read MLLL…EVEN, FLFV…RLDK, HLYV…VHNG, IYIS…VMND, LYAI…VLDD, and IYLV…TVIL.

As to quaternary structure, interacts with TOR1A. Expressed in the brain, primarily in neurons. In the cerebral cortex, mostly expressed in layers I and II (at protein level). Also observed in some neurons of the corpus striatum (at protein level). Expressed at high levels in the hippocampus, including in pyramidal cells of the CA1 and CA3 layers (at protein level). In the cerebellum, expression in Purkinje cells is higher than in granular cells (at protein level). Also detected in the medial septum, ventral pallidum, thalamus, hypothalamus, amygdala, inferior colliculi, locus caeruleus, peripyramidal nucleus, raphe nucleus, reticular formation, spinal trigeminal nucleus, and vestibular nuclei (at protein level). Low expression, if any, in glial cells (at protein level). Not observed in the corpus callosum.

It is found in the cytoplasm. It localises to the cytosol. The protein localises to the endoplasmic reticulum membrane. The chain is Kelch-like protein 14 (Klhl14) from Mus musculus (Mouse).